Consider the following 521-residue polypeptide: U4/U6 small nuclear ribonucleoprotein Prp4 (521 aa).

An N6-acetyllysine modification is found at Lys26. WD repeat units lie at residues 228 to 267 (GDDR…LLHT), 270 to 317 (GHNT…PVAD), 320 to 359 (GHTV…EILH), 362 to 401 (GHSM…CIMF), 404 to 443 (GHLK…CVYT), 446 to 486 (AHQN…PLKT), and 489 to 521 (GHEG…WMAE).

In terms of assembly, component of the precatalytic spliceosome (spliceosome B complex). Component of the U4/U6-U5 tri-snRNP complex, a building block of the precatalytic spliceosome (spliceosome B complex). The U4/U6-U5 tri-snRNP complex is composed of the U4, U6 and U5 snRNAs and at least PRPF3, PRPF4, PRPF6, PRPF8, PRPF31, SNRNP200, TXNL4A, SNRNP40, SNRPB, SNRPD1, SNRPD2, SNRPD3, SNRPE, SNRPF, SNRPG, DDX23, CD2BP2, PPIH, SNU13, EFTUD2, SART1 and USP39, plus LSM2, LSM3, LSM4, LSM5, LSM6, LSM7 and LSM8. Interacts directly with PRPF18, PPIH and PRPF3. Part of a heteromeric complex containing PPIH, PRPF3 and PRPF4 that is stable in the absence of RNA. Interacts with ERCC6.

It is found in the nucleus. It localises to the nucleus speckle. Plays a role in pre-mRNA splicing as component of the U4/U6-U5 tri-snRNP complex that is involved in spliceosome assembly, and as component of the precatalytic spliceosome (spliceosome B complex). The sequence is that of U4/U6 small nuclear ribonucleoprotein Prp4 (PRPF4) from Pongo abelii (Sumatran orangutan).